A 441-amino-acid polypeptide reads, in one-letter code: MTMLLDGGPQFPTLGVGGFGTARHHEMSNRDAGMGLNPFTEPSHAAAFKLSPASHDLSSSQSSAFTPQASGYASSLGHHAGQVPSYGGAAFNSTRDFLFRNRNSGIADSSSAGSQHGLFANHGPPGIGEPPGHLIFPGLHEQSSSHTSSNGHVVNGQMHLGLRGDIFGRPDPYRAVPSPRTDHYAAAQFHNYNHMNMSMNVAAHHGQGAFFRYMRQPIKQELSCKWLEESTMNHPQKTCDRTFSSMHELVTHMTMEHVGGPEQNNHICYWEECPRGGKSFKAKYKLVNHIRVHTGEKPFPCPFPGCGKIFARSENLKIHKRTHTGEKPFKCEFEGCDRRFANSSDRKKHMHVHTSDKPYICKVCDKSYTHPSSLRKHMKVHESQGSDSSPAASSGYESATPPAMVSANSEEPSKNSSATHQTNNNSHNTGLLPPNFNEWYV.

Residues 222-257 (LSCKWLEESTMNHPQKTCDRTFSSMHELVTHMTMEH) form a C2H2-type 1; atypical zinc finger. The C2H2-type 2; atypical zinc finger occupies 266–293 (HICYWEECPRGGKSFKAKYKLVNHIRVH). 3 consecutive C2H2-type zinc fingers follow at residues 299–323 (FPCP…KRTH), 329–353 (FKCE…MHVH), and 359–381 (YICK…MKVH). The segment at 375–441 (RKHMKVHESQ…LPPNFNEWYV (67 aa)) is disordered. Residues 383–399 (SQGSDSSPAASSGYESA) are compositionally biased toward low complexity. Over residues 406–429 (SANSEEPSKNSSATHQTNNNSHNT) the composition is skewed to polar residues.

The protein belongs to the GLI C2H2-type zinc-finger protein family. As to expression, first detected at early gastrula (stage 10.25) in the dorsal lip and prospective neural plate. Also expressed in the mesoderm at early gastrulation, with expression strongest on the dorsal side. Mesodermal expression continues at stage 12 but is hardly detectable after stage 14. As gastrulation proceeds, expression decreases in the dorsal lip and increases in the prospective neural plate. At the neural plate stage (stage 14), expressed strongly in the prospective mesencephalon and anterior rhombencephalon, after which expression becomes stronger in the anterior neural folds. At early tailbud stage (stage 20), expression becomes restricted to the dorsal region of forebrain, midbrain and hindbrain, and weakly to the dorsal trunk. After mid-tailbud stage, expression decreases in the diencephalon, appears in the lateral mesoderm of the tailbud region and becomes restricted in the dorsal part of the neural tube.

Its subcellular location is the nucleus. It localises to the cytoplasm. In terms of biological role, probably acts as a transcriptional activator. May bind to the minimal GLI-consensus sequence 5'-GGGTGGTC-3'. Can determine the ectodermal cell fate and promote the earliest step of neural and neural crest development. Involved in establishing left-right asymmetry in the embryo. The sequence is that of Zinc finger protein ZIC 3 (zic3) from Xenopus laevis (African clawed frog).